We begin with the raw amino-acid sequence, 503 residues long: 26S proteasome non-ATPase regulatory subunit 5 (503 aa).

Position 2 is an N-acetylalanine (Ala2).

Belongs to the proteasome subunit S5B/HSM3 family. As to quaternary structure, interacts with PSMC1, PSMC2, PSMD1 and PSMD6. Part of transient complex containing PSMD5, PSMC2, PSMC1 and PSMD2 formed during the assembly of the 26S proteasome.

Acts as a chaperone during the assembly of the 26S proteasome, specifically of the base subcomplex of the PA700/19S regulatory complex (RC). In the initial step of the base subcomplex assembly is part of an intermediate PSMD5:PSMC2:PSMC1:PSMD2 module which probably assembles with a PSMD10:PSMC4:PSMC5:PAAF1 module followed by dissociation of PSMD5. This Bos taurus (Bovine) protein is 26S proteasome non-ATPase regulatory subunit 5 (PSMD5).